The sequence spans 532 residues: MQKAQRIIKTYRRNRMIVCTICALVTLASTLSVRFISQRNLNQQRVVQFANHAVEELDKVLLPLQAGSEVLLPLIGLPCSVAHLPLRKQAAKLQTVRSIGLVQDGTLYCSSIFGYRNVPVVDILAELPAPQPLLRLTIDRALIKGSPVLIQWTPAAGSSNAGVMEMINIDLLTAMLLEPQLPQISSASLTVDKRHLLYGNGLVDSLPQPEDNENYQVSSQRFPFTINVNGPGATALAWHYLPTQLPLAVLLSLLVGYIAWLATAYRMSFSREINLGLAQHEFELFCQPLLNARSQQCIGVEILLRWNNPRQGWISPDVFIPIAEEHHLIVPLTRYVMAETIRQRHVFPMSSQFHVGINVAPSHFRRGVLIKDLNQYWFSAHPIQQLILEITERDALLDVDYRIARELHRKNVKLAIDDFGTGNSSFSWLETLRPDVLKIDKSFTAAIGSDAVNSTVTDIIIALGQRLNIELVAEGVETQEQAKYLRRHGVHILQGYLYAQPMPLRDFPKWLAGSQPPPARHNGHITPIMPLR.

2 helical membrane-spanning segments follow: residues 16–36 (MIVCTICALVTLASTLSVRFI) and 245–265 (LPLAVLLSLLVGYIAWLATAY). Residues 266–515 (RMSFSREINL…DFPKWLAGSQ (250 aa)) form the EAL domain.

The protein localises to the cell membrane. It carries out the reaction 3',3'-c-di-GMP + H2O = 5'-phosphoguanylyl(3'-&gt;5')guanosine + H(+). Functionally, phosphodiesterase (PDE) that catalyzes the hydrolysis of cyclic-di-GMP (c-di-GMP) to 5'-pGpG. May serve as a negative regulator of cellulose synthesis (as has been suggested for S.typhimurium); overexpression inhibits cell aggregation in strains able to produce adhesive curli fimbriae. Cyclic-di-GMP is a second messenger which controls cell surface-associated traits in bacteria. The protein is Probable cyclic di-GMP phosphodiesterase PdeD of Escherichia coli (strain K12).